The chain runs to 181 residues: UPF0398 protein LMOf2365_1918 (181 aa).

This sequence belongs to the UPF0398 family.

The sequence is that of UPF0398 protein LMOf2365_1918 from Listeria monocytogenes serotype 4b (strain F2365).